Reading from the N-terminus, the 1209-residue chain is Phospholipid-transporting ATPase ID (1209 aa).

Residues 1–12 are compositionally biased toward basic and acidic residues; the sequence is MTVPKEMPEKWA. The interval 1–36 is disordered; that stretch reads MTVPKEMPEKWARAQAPPSWSRKKPSWGTEEERRAR. The Cytoplasmic portion of the chain corresponds to 1–64; the sequence is MTVPKEMPEK…TSKYNILTFL (64 aa). The helical transmembrane segment at 65-86 threads the bilayer; that stretch reads PVNLFEQFQEVANTYFLFLLIL. The Exoplasmic loop segment spans residues 87 to 92; it reads QLIPQI. Residues 93–112 traverse the membrane as a helical segment; the sequence is SSLSWFTTIVPLVLVLTITA. Over 113–295 the chain is Cytoplasmic; the sequence is VKDATDDYFR…TSIDRLMNTL (183 aa). Residues 296–317 form a helical membrane-spanning segment; the sequence is VLWIFGFLVCMGVILAIGNAIW. Residues 318–346 lie on the Exoplasmic loop side of the membrane; sequence EHEVGMRFQVYLPWDEAVDSAFFSGFLSF. A helical membrane pass occupies residues 347 to 368; that stretch reads WSYIIILNTVVPISLYVSVEVI. Residues 369–889 lie on the Cytoplasmic side of the membrane; sequence RLGHSYFINW…GRWSYLRMCK (521 aa). The active-site 4-aspartylphosphate intermediate is Asp411. 12 residues coordinate ATP: Asp411, Lys412, Thr413, Glu515, Phe556, Lys579, Arg613, Thr693, Gly694, Asp695, Arg807, and Lys813. Residue Asp411 coordinates Mg(2+). Position 413 (Thr413) interacts with Mg(2+). Residue Asp833 participates in Mg(2+) binding. Residues Asn836 and Asp837 each contribute to the ATP site. Asp837 lines the Mg(2+) pocket. A helical transmembrane segment spans residues 890 to 910; that stretch reads FLCYFFYKNFAFTMVHFWFGF. Residues 911-922 lie on the Exoplasmic loop side of the membrane; sequence FCGFSAQTVYDQ. Residues 923-942 form a helical membrane-spanning segment; the sequence is YFITLYNIVYTSLPVLAMGV. Residues 943 to 972 are Cytoplasmic-facing; that stretch reads FDQDVPEQRSMEYPKLYEPGQLNLLFNKRE. The chain crosses the membrane as a helical span at residues 973–994; sequence FFICIAQGIYTSVLMFFIPYGV. Over 995–1008 the chain is Exoplasmic loop; that stretch reads FADATRDDGTQLAD. The chain crosses the membrane as a helical span at residues 1009 to 1031; that stretch reads YQSFAVTVATSLVIVVSVQIGLD. Residues 1032–1037 are Cytoplasmic-facing; sequence TGYWTA. The chain crosses the membrane as a helical span at residues 1038–1058; it reads INHFFIWGSLAVYFAILFAMH. At 1059 to 1078 the chain is on the exoplasmic loop side; it reads SNGLFDMFPNQFRFVGNAQN. A helical membrane pass occupies residues 1079–1103; that stretch reads TLAQPTVWLTIVLTTVVCIMPVVAF. Over 1104–1209 the chain is Cytoplasmic; sequence RFLRLNLKPD…SGGADKPLKG (106 aa). Ser1175 bears the Phosphoserine mark. Residues 1181 to 1209 form a disordered region; that stretch reads SSSWIESLRRKKSDSASSPSGGADKPLKG. Residues 1195 to 1209 show a composition bias toward low complexity; the sequence is SASSPSGGADKPLKG.

It belongs to the cation transport ATPase (P-type) (TC 3.A.3) family. Type IV subfamily. As to quaternary structure, component of a P4-ATPase flippase complex which consists of a catalytic alpha subunit ATP8B2 and an accessory beta subunit TMEM30A or TMEM30B. It depends on Mg(2+) as a cofactor. Isoform 3 is ubiquitous, with highest expression in aorta, cerebellum and uterus.

The protein localises to the cell membrane. Its subcellular location is the endoplasmic reticulum membrane. The catalysed reaction is ATP + H2O + phospholipidSide 1 = ADP + phosphate + phospholipidSide 2.. It catalyses the reaction a 1,2-diacyl-sn-glycero-3-phosphocholine(out) + ATP + H2O = a 1,2-diacyl-sn-glycero-3-phosphocholine(in) + ADP + phosphate + H(+). Functionally, catalytic component of P4-ATPase flippase complex, which catalyzes the hydrolysis of ATP coupled to the transport of phosphatidylcholine (PC) from the outer to the inner leaflet of the plasma membrane. May contribute to the maintenance of membrane lipid asymmetry. This Homo sapiens (Human) protein is Phospholipid-transporting ATPase ID.